Reading from the N-terminus, the 898-residue chain is Protein translocase subunit SecA (898 aa).

ATP-binding positions include Q87, G105 to T109, and D512. Positions M855–S865 are enriched in polar residues. Residues M855–Y898 form a disordered region. Positions L866 to R876 are enriched in basic and acidic residues. C880, C882, C891, and H892 together coordinate Zn(2+). A compositionally biased stretch (basic residues) spans K886 to Y898.

The protein belongs to the SecA family. In terms of assembly, monomer and homodimer. Part of the essential Sec protein translocation apparatus which comprises SecA, SecYEG and auxiliary proteins SecDF-YajC and YidC. It depends on Zn(2+) as a cofactor.

The protein resides in the cell inner membrane. The protein localises to the cytoplasm. It carries out the reaction ATP + H2O + cellular proteinSide 1 = ADP + phosphate + cellular proteinSide 2.. Functionally, part of the Sec protein translocase complex. Interacts with the SecYEG preprotein conducting channel. Has a central role in coupling the hydrolysis of ATP to the transfer of proteins into and across the cell membrane, serving both as a receptor for the preprotein-SecB complex and as an ATP-driven molecular motor driving the stepwise translocation of polypeptide chains across the membrane. This Histophilus somni (strain 129Pt) (Haemophilus somnus) protein is Protein translocase subunit SecA.